The chain runs to 101 residues: Glutaredoxin-1 (101 aa).

Positions 5 to 101 (KDRVEKLIQT…GSLSKMIAAL (97 aa)) constitute a Glutaredoxin domain. Residues Cys25 and Cys28 are joined by a disulfide bond.

Belongs to the glutaredoxin family.

The protein resides in the cytoplasm. It is found in the cytosol. Functionally, multifunctional enzyme with glutathione-dependent oxidoreductase, glutathione peroxidase and glutathione S-transferase (GST) activity. The disulfide bond functions as an electron carrier in the glutathione-dependent synthesis of deoxyribonucleotides by the enzyme ribonucleotide reductase. In addition, it is also involved in reducing cytosolic protein- and non-protein-disulfides in a coupled system with glutathione reductase. May play a role in protection against oxidative stress caused by superoxide in vivo by regulating the redox state of the protein sulfhydryl groups. This Rhizophagus irregularis (strain DAOM 181602 / DAOM 197198 / MUCL 43194) (Arbuscular mycorrhizal fungus) protein is Glutaredoxin-1.